The chain runs to 294 residues: DNA replication complex GINS protein SLD5 (294 aa).

The protein belongs to the GINS4/SLD5 family. Component of the GINS complex which is a heterotetramer composed of SLD5, PSF1, PSF2 and PSF3. Interacts with PSF2.

It is found in the nucleus. Required for DNA replication. Functions as part of the GINS complex which plays an essential role in the initiation of DNA replication by binding to DNA replication origins and facilitating the assembly of the DNA replication machinery. This is DNA replication complex GINS protein SLD5 from Saccharomyces cerevisiae (strain ATCC 204508 / S288c) (Baker's yeast).